Reading from the N-terminus, the 271-residue chain is Non-homologous end joining protein Ku (271 aa).

The Ku domain maps to 12–194 (KLSLVTCPVV…DQKPVPELLS (183 aa)). A disordered region spans residues 225-249 (EAKKTPPAKKTKAEEKTGKGSAESN).

This sequence belongs to the prokaryotic Ku family. In terms of assembly, homodimer. Interacts with LigD.

Its function is as follows. With LigD forms a non-homologous end joining (NHEJ) DNA repair enzyme, which repairs dsDNA breaks with reduced fidelity. Binds linear dsDNA with 5'- and 3'- overhangs but not closed circular dsDNA nor ssDNA. Recruits and stimulates the ligase activity of LigD. The protein is Non-homologous end joining protein Ku of Methylocella silvestris (strain DSM 15510 / CIP 108128 / LMG 27833 / NCIMB 13906 / BL2).